Here is a 145-residue protein sequence, read N- to C-terminus: Transcriptional regulator MraZ (145 aa).

SpoVT-AbrB domains follow at residues 7-54 (NATN…GPDL) and 83-126 (GVFM…QPQA).

It belongs to the MraZ family. In terms of assembly, forms oligomers.

The protein resides in the cytoplasm. The protein localises to the nucleoid. This is Transcriptional regulator MraZ from Rhizobium johnstonii (strain DSM 114642 / LMG 32736 / 3841) (Rhizobium leguminosarum bv. viciae).